Reading from the N-terminus, the 688-residue chain is Elongation factor G (688 aa).

One can recognise a tr-type G domain in the interval 8–282; it reads DKFRNFGIMA…GVVDYLPSPL (275 aa). GTP-binding positions include 17-24, 81-85, and 135-138; these read AHIDAGKT, DTPGH, and NKMD.

Belongs to the TRAFAC class translation factor GTPase superfamily. Classic translation factor GTPase family. EF-G/EF-2 subfamily.

It is found in the cytoplasm. In terms of biological role, catalyzes the GTP-dependent ribosomal translocation step during translation elongation. During this step, the ribosome changes from the pre-translocational (PRE) to the post-translocational (POST) state as the newly formed A-site-bound peptidyl-tRNA and P-site-bound deacylated tRNA move to the P and E sites, respectively. Catalyzes the coordinated movement of the two tRNA molecules, the mRNA and conformational changes in the ribosome. This chain is Elongation factor G, found in Clostridium botulinum (strain Alaska E43 / Type E3).